We begin with the raw amino-acid sequence, 1090 residues long: Exocyst complex component SEC5A (1090 aa).

Positions 18-128 (LKEQAKRDLT…ARKEDDGAWD (111 aa)) are disordered. Low complexity predominate over residues 45–69 (QQPRQQKPVAAAAAPPKKSAAAVRK). The segment covering 109–124 (RGSDVREKGRARKEDD) has biased composition (basic and acidic residues). At Ser-180 the chain carries Phosphoserine. 3 disordered regions span residues 759 to 783 (TSRQ…NTYG), 987 to 1010 (VETP…DKQS), and 1046 to 1090 (APLE…PRRR). Over residues 998–1009 (RGSEDTVSDDKQ) the composition is skewed to basic and acidic residues. Over residues 1058 to 1082 (TYSSFRGSMDSPSRNYRGSQSSGSP) the composition is skewed to polar residues.

Belongs to the SEC5 family. The exocyst complex is composed of SEC3, SEC5, SEC6, SEC8, SEC10, EXO70A1 and EXO84B. Interacts with SEC3A and EXO70B1. Binds to EXO70H1 and EXO70B2. Binds directly to B1L.

The protein resides in the cytoplasm. Its subcellular location is the cytosol. It localises to the secreted. It is found in the extracellular exosome. In terms of biological role, component of the exocyst complex involved in the docking of exocytic vesicles with fusion sites on the plasma membrane during regulated or polarized secretion. Involved in polarized cell growth and organ morphogenesis. During cytokinesis, involved in cell plate initiation, cell plate maturation and formation of new primary cell wall. Probable component of an exocyst subcomplex specifically involved in autophagy-related, Golgi-independent membrane traffic to the vacuole. Regulates autophagosome formation and autophagy-related Golgi-independent import into the vacuole. This is Exocyst complex component SEC5A from Arabidopsis thaliana (Mouse-ear cress).